The sequence spans 141 residues: Large-conductance mechanosensitive channel (141 aa).

Transmembrane regions (helical) follow at residues 17-37 (MDLA…ASIV), 40-60 (LIMP…LFIA), and 86-106 (GNFV…FIIV).

It belongs to the MscL family. In terms of assembly, homopentamer.

The protein localises to the cell inner membrane. Channel that opens in response to stretch forces in the membrane lipid bilayer. May participate in the regulation of osmotic pressure changes within the cell. The protein is Large-conductance mechanosensitive channel of Thiobacillus denitrificans (strain ATCC 25259 / T1).